The following is a 470-amino-acid chain: Ubiquitin carboxyl-terminal hydrolase calypso (470 aa).

Positions 11 to 241 (GWLELESDPG…ITHKLKMLRT (231 aa)) constitute a UCH catalytic domain. Cys98 (nucleophile) is an active-site residue. His177 acts as the Proton donor in catalysis. Residues 260–280 (ESRSQAEIRETVDKIKKEEQE) adopt a coiled-coil conformation. Positions 392 to 420 (NYDEFICTFLSMLAYQGELGDLVTQHLVT) constitute a ULD domain. Positions 422–470 (RKPSLGGVQNSGSRGVVRNYNKKSTTNGSSPKTPSSKRRRGRTKYRKRK) are positively charged C-terminal tail required for binding nucleosomes. Positions 423–434 (KPSLGGVQNSGS) are enriched in polar residues. Residues 423–470 (KPSLGGVQNSGSRGVVRNYNKKSTTNGSSPKTPSSKRRRGRTKYRKRK) are disordered. Residues 456–470 (SSKRRRGRTKYRKRK) show a composition bias toward basic residues.

This sequence belongs to the peptidase C12 family. BAP1 subfamily. As to quaternary structure, catalytic component of the polycomb repressive deubiquitinase (PR-DUB) complex, at least composed of caly/calypso, Asx and sba (MBD5/6 homolog). The PR-DUB complex associates with nucleosomes to mediate deubiquitination of histone H2AK118ub1 substrates; the association requires the positively charged C-terminal tail of caly, probably due to direct binding of DNA. Interacts (via ULD domain) with Asx (via DEUBAD domain); the interaction produces a stable heterodimer with a composite binding site for ubiquitin. Homodimerizes (via coiled-coil hinge-region between the UCH and ULD domains) to mediate assembly of 2 copies of the caly-Asx heterodimer into a bisymmetric tetramer; dimerization enhances PR-DUB association with nucleosomes.

It is found in the nucleus. It catalyses the reaction Thiol-dependent hydrolysis of ester, thioester, amide, peptide and isopeptide bonds formed by the C-terminal Gly of ubiquitin (a 76-residue protein attached to proteins as an intracellular targeting signal).. Its function is as follows. Catalytic component of the polycomb repressive deubiquitinase (PR-DUB) complex, a complex that specifically mediates deubiquitination of histone H2A monoubiquitinated at 'Lys-119' (H2AK118ub1). Mediates bisymmetric organization of the PR-DUB complex and is involved in association with nucleosomes to mediate deubiquitination. Does not deubiquitinate monoubiquitinated histone H2B. Required to maintain the transcriptionally repressive state of homeotic genes throughout development. The PR-DUB complex has weak or no activity toward 'Lys-48'- and 'Lys-63'-linked polyubiquitin chains. Polycomb group (PcG) protein. This is Ubiquitin carboxyl-terminal hydrolase calypso from Culex quinquefasciatus (Southern house mosquito).